We begin with the raw amino-acid sequence, 238 residues long: Cysteine-rich venom protein kaouthin-2 (238 aa).

A signal peptide spans 1-19 (MIAFIVLLSLAAVLQQSSG). Residues 20–25 (TVDFAS) constitute a propeptide that is removed on maturation. Residues 38-164 (VDKHNALRRS…SSKYLYVCQY (127 aa)) enclose the SCP domain. 8 disulfides stabilise this stretch: Cys-75/Cys-153, Cys-92/Cys-165, Cys-148/Cys-162, Cys-184/Cys-191, Cys-187/Cys-196, Cys-200/Cys-233, Cys-209/Cys-227, and Cys-218/Cys-231. One can recognise a ShKT domain in the interval 200-233 (CKHHNVFSNCQSLAKQNACQTEWMKSKCAASCFC).

As to expression, expressed by the venom gland.

It localises to the secreted. The chain is Cysteine-rich venom protein kaouthin-2 from Naja kaouthia (Monocled cobra).